The primary structure comprises 171 residues: Sorcin (171 aa).

4 EF-hand domains span residues 3-38 (MDTNSLRHIFSRVDADKSGSISANELQTSLSNGLGT), 40-69 (LNIRTVQLMVAMFDRDMNGTINFNEFLGLF), 70-105 (KYVQDWQTCFRRYDRDNSGSIDLNEFSNALISFGYH), and 106-140 (LSPQFVNLMMRRFDRNRGSIAFDDFIYACVCLQTL). Positions 16, 18, 20, 22, 27, 53, 55, 57, 59, 64, 83, 85, 87, 89, and 94 each coordinate Ca(2+).

It localises to the cytoplasm. Functionally, calcium-binding protein. The polypeptide is Sorcin (Schistosoma japonicum (Blood fluke)).